A 219-amino-acid chain; its full sequence is Inner membrane protein YghB (219 aa).

Over 1–17 (MAVIQDIIAALWQHDFA) the chain is Cytoplasmic. Residues 18-38 (ALADPHIVSVVYFVMFATLFL) form a helical membrane-spanning segment. Topologically, residues 39-67 (ENGLLPASFLPGDSLLILAGALIAQGVMD) are periplasmic. A helical membrane pass occupies residues 68 to 88 (FLPTIAILTAAASLGCWLSYI). Residues 89-160 (QGRWLGNTKT…RRFQFFNWLS (72 aa)) lie on the Cytoplasmic side of the membrane. The chain crosses the membrane as a helical span at residues 161–181 (GLLWVSVVTSFGYALSMIPFV). The Periplasmic portion of the chain corresponds to 182-191 (KRHEDQVMTF). Residues 192–212 (LMILPIALLTAGLLGTLFVVI) form a helical membrane-spanning segment. At 213-219 (KKKYCNA) the chain is on the cytoplasmic side.

It belongs to the DedA family.

It is found in the cell inner membrane. The sequence is that of Inner membrane protein YghB (yghB) from Escherichia coli O6:H1 (strain CFT073 / ATCC 700928 / UPEC).